Here is a 150-residue protein sequence, read N- to C-terminus: 3-dehydroquinate dehydratase (150 aa).

Tyr26 acts as the Proton acceptor in catalysis. Substrate is bound by residues Asn77, His83, and Asp90. Residue His103 is the Proton donor of the active site. Residues 104-105 (LS) and Arg114 contribute to the substrate site.

It belongs to the type-II 3-dehydroquinase family. As to quaternary structure, homododecamer.

The enzyme catalyses 3-dehydroquinate = 3-dehydroshikimate + H2O. It functions in the pathway metabolic intermediate biosynthesis; chorismate biosynthesis; chorismate from D-erythrose 4-phosphate and phosphoenolpyruvate: step 3/7. In terms of biological role, catalyzes a trans-dehydration via an enolate intermediate. This chain is 3-dehydroquinate dehydratase, found in Mannheimia succiniciproducens (strain KCTC 0769BP / MBEL55E).